The primary structure comprises 370 residues: Protein DUF642 L-GALACTONO-1,4-LACTONE-RESPONSIVE GENE 1 (370 aa).

The signal sequence occupies residues methionine 1–serine 22. Asparagine 124 carries an N-linked (GlcNAc...) asparagine glycan.

In terms of tissue distribution, expressed at low levels in roots, seedlings and leaves.

Its subcellular location is the secreted. The protein localises to the cell wall. This Arabidopsis thaliana (Mouse-ear cress) protein is Protein DUF642 L-GALACTONO-1,4-LACTONE-RESPONSIVE GENE 1.